A 103-amino-acid polypeptide reads, in one-letter code: Large ribosomal subunit protein bL21 (103 aa).

The protein belongs to the bacterial ribosomal protein bL21 family. Part of the 50S ribosomal subunit. Contacts protein L20.

Functionally, this protein binds to 23S rRNA in the presence of protein L20. The polypeptide is Large ribosomal subunit protein bL21 (Methylococcus capsulatus (strain ATCC 33009 / NCIMB 11132 / Bath)).